The primary structure comprises 151 residues: 3-dehydroquinate dehydratase (151 aa).

Y24 serves as the catalytic Proton acceptor. Substrate contacts are provided by N76, H82, and D89. H102 (proton donor) is an active-site residue. Substrate-binding positions include V103–S104 and R113.

This sequence belongs to the type-II 3-dehydroquinase family. As to quaternary structure, homododecamer.

It catalyses the reaction 3-dehydroquinate = 3-dehydroshikimate + H2O. The protein operates within metabolic intermediate biosynthesis; chorismate biosynthesis; chorismate from D-erythrose 4-phosphate and phosphoenolpyruvate: step 3/7. In terms of biological role, catalyzes a trans-dehydration via an enolate intermediate. The chain is 3-dehydroquinate dehydratase from Rhodopseudomonas palustris (strain TIE-1).